The sequence spans 396 residues: S-adenosylmethionine synthase (396 aa).

Residue His-16 coordinates ATP. Asp-18 is a binding site for Mg(2+). Residue Glu-44 coordinates K(+). Residues Glu-57 and Gln-100 each contribute to the L-methionine site. Residues 100-110 (QSPDINQGVDR) form a flexible loop region. ATP contacts are provided by residues 165-167 (DAK), 231-232 (KF), Asp-240, 246-247 (RK), Ala-263, and Lys-267. Asp-240 lines the L-methionine pocket. Lys-271 lines the L-methionine pocket.

Belongs to the AdoMet synthase family. In terms of assembly, homotetramer; dimer of dimers. Mg(2+) serves as cofactor. It depends on K(+) as a cofactor.

The protein resides in the cytoplasm. It carries out the reaction L-methionine + ATP + H2O = S-adenosyl-L-methionine + phosphate + diphosphate. It functions in the pathway amino-acid biosynthesis; S-adenosyl-L-methionine biosynthesis; S-adenosyl-L-methionine from L-methionine: step 1/1. Its function is as follows. Catalyzes the formation of S-adenosylmethionine (AdoMet) from methionine and ATP. The overall synthetic reaction is composed of two sequential steps, AdoMet formation and the subsequent tripolyphosphate hydrolysis which occurs prior to release of AdoMet from the enzyme. This Ectopseudomonas mendocina (strain ymp) (Pseudomonas mendocina) protein is S-adenosylmethionine synthase.